The sequence spans 459 residues: FBD-associated F-box protein At5g27750 (459 aa).

One can recognise an F-box domain in the interval F4 to T50. The 53-residue stretch at T374–F426 folds into the FBD domain.

This chain is FBD-associated F-box protein At5g27750, found in Arabidopsis thaliana (Mouse-ear cress).